We begin with the raw amino-acid sequence, 56 residues long: Large ribosomal subunit protein bL33 (56 aa).

This sequence belongs to the bacterial ribosomal protein bL33 family.

The protein is Large ribosomal subunit protein bL33 of Tropheryma whipplei (strain TW08/27) (Whipple's bacillus).